The chain runs to 528 residues: Phosphoenolpyruvate carboxykinase (ATP) (528 aa).

Positions 56, 192, and 198 each coordinate substrate. ATP-binding positions include Lys-198, His-217, and 233-241 (GLSGTGKTT). Mn(2+) contacts are provided by Lys-198 and His-217. Residue Asp-254 coordinates Mn(2+). 3 residues coordinate ATP: Glu-282, Arg-319, and Thr-444. Substrate is bound at residue Arg-319.

The protein belongs to the phosphoenolpyruvate carboxykinase (ATP) family. It depends on Mn(2+) as a cofactor.

It localises to the cytoplasm. The catalysed reaction is oxaloacetate + ATP = phosphoenolpyruvate + ADP + CO2. It participates in carbohydrate biosynthesis; gluconeogenesis. Involved in the gluconeogenesis. Catalyzes the conversion of oxaloacetate (OAA) to phosphoenolpyruvate (PEP) through direct phosphoryl transfer between the nucleoside triphosphate and OAA. In Bacillus cereus (strain AH187), this protein is Phosphoenolpyruvate carboxykinase (ATP).